Reading from the N-terminus, the 312-residue chain is Deoxyribonuclease-1-like 1 (312 aa).

Positions 1–35 (MPSGQPVFPRRVPDAYIAMRGLVVASLLILLVGGT) are cleaved as a signal peptide. A glycan (N-linked (GlcNAc...) asparagine) is linked at Asn102. Residue Glu113 is part of the active site. An N-linked (GlcNAc...) asparagine glycan is attached at Asn133. His164 is an active-site residue. Cys203 and Cys240 are joined by a disulfide. Asn239 carries N-linked (GlcNAc...) asparagine glycosylation.

This sequence belongs to the DNase I family.

The protein resides in the endoplasmic reticulum. The sequence is that of Deoxyribonuclease-1-like 1 (Dnase1l1) from Rattus norvegicus (Rat).